The chain runs to 241 residues: Capsid protein (241 aa).

Positions 1–26 match the Bipartite nuclear localization signal motif; it reads MSPASSWKRKRPSSSSAQASKKRRVY. Residues 1–30 form a disordered region; that stretch reads MSPASSWKRKRPSSSSAQASKKRRVYRPAV.

It belongs to the geminiviridae capsid protein family. As to quaternary structure, homomultimer. Interacts with the movement protein. Binds to single-stranded and double-stranded viral DNA.

The protein resides in the virion. It is found in the host nucleus. Its function is as follows. Encapsidates the viral genome into characteristic twinned ('geminate') particles. Binds the genomic viral ssDNA and shuttles it into and out of the cell nucleus. Plays a role in protection of the genome from degradation, virus acquisition and transmission by insect vectors, infectivity, and systemic movement. The CP of monopartite geminiviruses is absolutely essential for virus movement. The sequence is that of Capsid protein from Avena sativa (Oat).